The sequence spans 705 residues: MPSKQIRKQSVILTRGARKREEDSGTDVGEGADDWAQSKAAVRPPDQLELTDAELKEEFTRILTANNPHAPQNIVRYSFKERTYKLIGFVNQMAIHFSQVGNLIPKDSDEGRRQHYRDELVAGSQESVKVVTSDTEILEEEEEPKEGEGEGEGEAEGEAEAGSQTDVPAAAETTEKVIEEELMAPVQPKERKLTNQFNFSERASQTFNNPLRDRECQMEPPPRTNFSATANQWEIYDAYVDELEKLEKTKEKEKTKTPVAKKTEKMAMRKLTSMESQSDDITKVTQAAKIVERMVNQNTYDDVAQDFKYYEDAADEYRDQEGTLLPLWKFQNDKAKRLAVTALCWNPKYKDLFAVGHGSYDFMKQSRGMLLLYSMKNPSFPEYMFSSESGIMCLDMHMDHPYLVVVGYYDGNVAIYNLKKPHSQPCFRSTSKSGKHTDPVWQVKWQKDDMDHNLNFFSVSSDGRIVSWTLVKSELVHIDVIKLKDEGSTTEIPEGLQLHTVGCGTAFDFHKEIDYLFLVGTEEGKIYKCSKSYSSQFLDTYDAHNMAVDAVLWNPYHARVFISCSSDWTVKIWDHAIKTPMFIYDLNAAVGDVAWAPYSSTVFAAVTTDGKAHVFDLAVNKYEAICNQPVVAKKKNKITHVQFNPIHPIIIVGDDRGHITCLKLSPNLRKMPKEKKGQEVQKGPAVEIAKLDKLLNLVREVKTKT.

2 disordered regions span residues M1–P44 and A122–A169. 2 positions are modified to phosphoserine: S124 and S127. The segment covering S124 to T135 has biased composition (polar residues). Residues E136–A159 show a composition bias toward acidic residues. WD repeat units follow at residues S386–C426, K435–I478, A543–I583, D585–I625, and K633–P672.

This sequence belongs to the dynein intermediate chain family. As to quaternary structure, consists of at least two heavy chains and a number of intermediate and light chains. Interacts with BICD2. Interacts with CFAP45 and CFAP52. Interacts with CFAP53.

It is found in the cytoplasm. The protein localises to the cytoskeleton. It localises to the cilium axoneme. Its function is as follows. Part of the dynein complex of respiratory cilia. The polypeptide is Dynein axonemal intermediate chain 1 (Dnai1) (Rattus norvegicus (Rat)).